A 144-amino-acid polypeptide reads, in one-letter code: Small ribosomal subunit protein eS19A (144 aa).

This sequence belongs to the eukaryotic ribosomal protein eS19 family. Component of the small ribosomal subunit (SSU). Mature yeast ribosomes consist of a small (40S) and a large (60S) subunit. The 40S small subunit contains 1 molecule of ribosomal RNA (18S rRNA) and 33 different proteins (encoded by 57 genes). The large 60S subunit contains 3 rRNA molecules (25S, 5.8S and 5S rRNA) and 46 different proteins (encoded by 81 genes).

It is found in the cytoplasm. Component of the ribosome, a large ribonucleoprotein complex responsible for the synthesis of proteins in the cell. The small ribosomal subunit (SSU) binds messenger RNAs (mRNAs) and translates the encoded message by selecting cognate aminoacyl-transfer RNA (tRNA) molecules. The large subunit (LSU) contains the ribosomal catalytic site termed the peptidyl transferase center (PTC), which catalyzes the formation of peptide bonds, thereby polymerizing the amino acids delivered by tRNAs into a polypeptide chain. The nascent polypeptides leave the ribosome through a tunnel in the LSU and interact with protein factors that function in enzymatic processing, targeting, and the membrane insertion of nascent chains at the exit of the ribosomal tunnel. eS19 is required for proper maturation of the small (40S) ribosomal subunit. Binds to 40S pre-ribosomal particles, probably required after association of NOC4 but before association of ENP1, TSR1 and RIO2 with 20/21S pre-rRNA. The chain is Small ribosomal subunit protein eS19A from Saccharomyces cerevisiae (strain ATCC 204508 / S288c) (Baker's yeast).